Reading from the N-terminus, the 268-residue chain is MPLSVNPPLFIPFIVAGDPAPDVTIDLALALEEAGADILELGVPYSDPLADGPTIQRAAARALDGGMTLPKAIQLIGEMRKKGVNIPIILFTYYNPVLQLGEESFFALARENGADGVLIPDLPFEESGPLRELGERFGLPLISLVAPTSKQRIERIASAAQGFLYCVSSLGVTGVRETLPETLGDFLREVKRHSRVPVAVGFGISAPEQVAMLKEVCDGVVVGSALVQKVEQLAPRLQTPDEREAAVAEFAAYARSLAAPLREAYSSR.

Residues Glu40 and Asp51 each act as proton acceptor in the active site.

It belongs to the TrpA family. Tetramer of two alpha and two beta chains.

The enzyme catalyses (1S,2R)-1-C-(indol-3-yl)glycerol 3-phosphate + L-serine = D-glyceraldehyde 3-phosphate + L-tryptophan + H2O. It functions in the pathway amino-acid biosynthesis; L-tryptophan biosynthesis; L-tryptophan from chorismate: step 5/5. Functionally, the alpha subunit is responsible for the aldol cleavage of indoleglycerol phosphate to indole and glyceraldehyde 3-phosphate. This Geobacillus kaustophilus (strain HTA426) protein is Tryptophan synthase alpha chain.